A 501-amino-acid chain; its full sequence is MSSPAQPAVPAPLANLKIQHTKIFINNEWHDSVSSKKFPVLNPATEEVICHVEEGDKADVDKAVKAARQAFQIGSPWRTMDASERGRLLNKLADLMERDRLLLATMESMNAGKVFAHAYLLDVEISIKALQYFAGWADKIHGQTIPSDGNIFTYTRREPIGVCGQIIPWNGPLIIFTWKLGPALSCGNTVVVKPAEQTPLTALHMASLIKEAGFPPGVVNIVPGYGPTAGGAISSHMDIDKVSFTGSTEVGKLIKEAAGKSNLKRVTLELGGKSPCIVFADADLDSAVEFAHQGVFFHQGQICVAASRLFVEESIYDEFVRRSVERAKKYILGNPLNSGINQGPQIDKEQHNKILGLIESGKKEGAKLECGGGRWGNKGFFVQPTVFSNVTDEMRIAKEEIFGPVQQIMKFKSMDDVIKRANNTTYGLAAGVFTKDLDKAITVSSALQAGMVWVNCYLAVPVQCPFGGFKMSGNGRELGEHGLYEYTELKTVAMQISQKNS.

N-acetylserine is present on Ser-2. N6-acetyllysine is present on residues Lys-91 and Lys-128. 246–251 contacts NAD(+); sequence GSTEVG. Position 252 is an N6-acetyllysine (Lys-252). Glu-269 acts as the Proton acceptor in catalysis. Cys-303 (nucleophile) is an active-site residue. An N6-acetyllysine mark is found at Lys-353, Lys-367, and Lys-410. Ser-413 carries the phosphoserine modification. Lys-419 and Lys-435 each carry N6-acetyllysine.

It belongs to the aldehyde dehydrogenase family. Homotetramer. In terms of tissue distribution, highest level in liver, high level in lung, low level in kidney and testis.

It localises to the cytoplasm. The catalysed reaction is an aldehyde + NAD(+) + H2O = a carboxylate + NADH + 2 H(+). It functions in the pathway alcohol metabolism; ethanol degradation; acetate from ethanol: step 2/2. Its function is as follows. Can oxidize benzaldehyde, propionaldehyde and acetaldehyde. No detectable activity with retinal. This chain is Aldehyde dehydrogenase, cytosolic 1, found in Mus musculus (Mouse).